A 399-amino-acid polypeptide reads, in one-letter code: Tyrosine--tRNA ligase 2 (399 aa).

The 'HIGH' region motif lies at 42-51 (PTAPDLHLGH). A 'KMSKS' region motif is present at residues 226-230 (KMSKS). Lys-229 lines the ATP pocket. Residues 336–396 (MPVASVLNKA…GKKAFARITL (61 aa)) enclose the S4 RNA-binding domain.

Belongs to the class-I aminoacyl-tRNA synthetase family. TyrS type 2 subfamily. In terms of assembly, homodimer.

The protein resides in the cytoplasm. The catalysed reaction is tRNA(Tyr) + L-tyrosine + ATP = L-tyrosyl-tRNA(Tyr) + AMP + diphosphate + H(+). In terms of biological role, catalyzes the attachment of tyrosine to tRNA(Tyr) in a two-step reaction: tyrosine is first activated by ATP to form Tyr-AMP and then transferred to the acceptor end of tRNA(Tyr). The polypeptide is Tyrosine--tRNA ligase 2 (Pseudomonas aeruginosa (strain ATCC 15692 / DSM 22644 / CIP 104116 / JCM 14847 / LMG 12228 / 1C / PRS 101 / PAO1)).